The primary structure comprises 32 residues: Dermaseptin-8 (32 aa).

Residue Q32 is modified to Glutamine amide.

In terms of tissue distribution, expressed by the skin glands.

The protein resides in the secreted. Antimicrobial peptide, active against the Gram-positive bacterium S.aureus, and the Gram-negative bacteriun E.coli. Has hemolytic activity at 432 uM. The protein is Dermaseptin-8 of Phyllomedusa tarsius (Brownbelly leaf frog).